The primary structure comprises 142 residues: Hemoglobin subunit alpha 1 (142 aa).

S1 carries the post-translational modification N-acetylserine. In terms of domain architecture, Globin spans 1–142 (SLSDKDKAAV…VSLALSERYR (142 aa)). H59 lines the O2 pocket. H88 is a heme b binding site.

The protein belongs to the globin family. Hb1 is a heterotetramer of two alpha-1 chains and two beta-1 chains. Hb2 is a heterotetramer of two alpha-2 chains and two beta-1 chains. HbC is a heterotetramer of two alpha-1 chains and two beta-2 chains. In terms of tissue distribution, red blood cells.

In terms of biological role, involved in oxygen transport from gills to the various peripheral tissues. The polypeptide is Hemoglobin subunit alpha 1 (Eleginops maclovinus (Patagonian blennie)).